The following is a 99-amino-acid chain: uncharacterized protein (99 aa).

This is an uncharacterized protein from Dictyostelium discoideum (Social amoeba).